Here is a 663-residue protein sequence, read N- to C-terminus: Beta-galactosidase YesZ (663 aa).

Arg107 contacts substrate. Position 111 (Cys111) interacts with Zn(2+). Asn145 serves as a coordination point for substrate. Catalysis depends on Glu146, which acts as the Proton donor. 3 residues coordinate Zn(2+): Cys154, Cys156, and Cys159. Glu297 serves as the catalytic Nucleophile. 346-349 (EQPH) serves as a coordination point for substrate.

It belongs to the glycosyl hydrolase 42 family. In terms of assembly, homotrimer.

It carries out the reaction Hydrolysis of terminal non-reducing beta-D-galactose residues in beta-D-galactosides.. In terms of biological role, may play a role in the degradation of rhamnogalacturonan derived from plant cell walls. The polypeptide is Beta-galactosidase YesZ (yesZ) (Bacillus licheniformis (strain ATCC 14580 / DSM 13 / JCM 2505 / CCUG 7422 / NBRC 12200 / NCIMB 9375 / NCTC 10341 / NRRL NRS-1264 / Gibson 46)).